A 37-amino-acid chain; its full sequence is Cytochrome b6-f complex subunit 5 (37 aa).

A helical transmembrane segment spans residues 5–25; the sequence is LLDGLVLGLVFATLGGLFYAA.

It belongs to the PetG family. As to quaternary structure, the 4 large subunits of the cytochrome b6-f complex are cytochrome b6, subunit IV (17 kDa polypeptide, PetD), cytochrome f and the Rieske protein, while the 4 small subunits are PetG, PetL, PetM and PetN. The complex functions as a dimer.

It localises to the cellular thylakoid membrane. Its function is as follows. Component of the cytochrome b6-f complex, which mediates electron transfer between photosystem II (PSII) and photosystem I (PSI), cyclic electron flow around PSI, and state transitions. PetG is required for either the stability or assembly of the cytochrome b6-f complex. The sequence is that of Cytochrome b6-f complex subunit 5 from Mastigocladus laminosus (Fischerella sp.).